We begin with the raw amino-acid sequence, 556 residues long: Probable glucomannan 4-beta-mannosyltransferase 3 (556 aa).

A helical membrane pass occupies residues 56 to 76 (IFVFIPILKCLVTICLVMSLL). Residue D159 is part of the active site. Residues D218 and D220 each contribute to the substrate site. D312 is an active-site residue. 4 consecutive transmembrane segments (helical) span residues 391–411 (IVVH…TVLF), 428–448 (ITIL…FWIL), 509–529 (LVVG…GGSY), and 530–550 (FYVY…GYIG).

Belongs to the glycosyltransferase 2 family. Plant cellulose synthase-like A subfamily.

The protein localises to the golgi apparatus membrane. It carries out the reaction GDP-mannose + (glucomannan)n = GDP + (glucomannan)n+1.. Functionally, probable mannan synthase which consists of a 4-beta-mannosyltransferase activity on mannan using GDP-mannose. The beta-1,4-mannan product is the backbone for galactomannan synthesis by galactomannan galactosyltransferase. Galactomannan is a noncellulosic polysaccharides of plant cell wall. This Arabidopsis thaliana (Mouse-ear cress) protein is Probable glucomannan 4-beta-mannosyltransferase 3.